We begin with the raw amino-acid sequence, 368 residues long: Chaperone protein DnaJ (368 aa).

A J domain is found at 5 to 70 (DYYQVLGVPR…KKRKLYDTHG (66 aa)). A CR-type zinc finger spans residues 124-201 (GVERQIQIPT…CNGAGRVEDH (78 aa)). Residues Cys-137, Cys-140, Cys-153, Cys-156, Cys-175, Cys-178, Cys-189, and Cys-192 each coordinate Zn(2+). CXXCXGXG motif repeat units follow at residues 137 to 144 (CTHCNGSG), 153 to 160 (CGTCRGSG), 175 to 182 (CPHCGGRG), and 189 to 196 (CKVCNGAG).

It belongs to the DnaJ family. Homodimer. The cofactor is Zn(2+).

It localises to the cytoplasm. Functionally, participates actively in the response to hyperosmotic and heat shock by preventing the aggregation of stress-denatured proteins and by disaggregating proteins, also in an autonomous, DnaK-independent fashion. Unfolded proteins bind initially to DnaJ; upon interaction with the DnaJ-bound protein, DnaK hydrolyzes its bound ATP, resulting in the formation of a stable complex. GrpE releases ADP from DnaK; ATP binding to DnaK triggers the release of the substrate protein, thus completing the reaction cycle. Several rounds of ATP-dependent interactions between DnaJ, DnaK and GrpE are required for fully efficient folding. Also involved, together with DnaK and GrpE, in the DNA replication of plasmids through activation of initiation proteins. In Xylella fastidiosa (strain M12), this protein is Chaperone protein DnaJ.